The primary structure comprises 393 residues: NAD(P)H-quinone oxidoreductase subunit H, chloroplastic (393 aa).

The protein belongs to the complex I 49 kDa subunit family. NDH is composed of at least 16 different subunits, 5 of which are encoded in the nucleus.

It is found in the plastid. The protein localises to the chloroplast thylakoid membrane. It carries out the reaction a plastoquinone + NADH + (n+1) H(+)(in) = a plastoquinol + NAD(+) + n H(+)(out). The catalysed reaction is a plastoquinone + NADPH + (n+1) H(+)(in) = a plastoquinol + NADP(+) + n H(+)(out). Functionally, NDH shuttles electrons from NAD(P)H:plastoquinone, via FMN and iron-sulfur (Fe-S) centers, to quinones in the photosynthetic chain and possibly in a chloroplast respiratory chain. The immediate electron acceptor for the enzyme in this species is believed to be plastoquinone. Couples the redox reaction to proton translocation, and thus conserves the redox energy in a proton gradient. This Lolium perenne (Perennial ryegrass) protein is NAD(P)H-quinone oxidoreductase subunit H, chloroplastic.